A 671-amino-acid chain; its full sequence is DNA ligase (671 aa).

NAD(+) is bound by residues 32–36 (DAEYD), 81–82 (SL), and Glu113. Lys115 (N6-AMP-lysine intermediate) is an active-site residue. 4 residues coordinate NAD(+): Arg136, Glu173, Lys290, and Lys314. The Zn(2+) site is built by Cys408, Cys411, Cys426, and Cys432. The BRCT domain occupies 593-671 (EIDSPFAGKT…EAEMMRLLGE (79 aa)).

It belongs to the NAD-dependent DNA ligase family. LigA subfamily. The cofactor is Mg(2+). It depends on Mn(2+) as a cofactor.

It carries out the reaction NAD(+) + (deoxyribonucleotide)n-3'-hydroxyl + 5'-phospho-(deoxyribonucleotide)m = (deoxyribonucleotide)n+m + AMP + beta-nicotinamide D-nucleotide.. Its function is as follows. DNA ligase that catalyzes the formation of phosphodiester linkages between 5'-phosphoryl and 3'-hydroxyl groups in double-stranded DNA using NAD as a coenzyme and as the energy source for the reaction. It is essential for DNA replication and repair of damaged DNA. The polypeptide is DNA ligase (Klebsiella pneumoniae subsp. pneumoniae (strain ATCC 700721 / MGH 78578)).